A 435-amino-acid polypeptide reads, in one-letter code: NADH-quinone oxidoreductase subunit D (435 aa).

It belongs to the complex I 49 kDa subunit family. NDH-1 is composed of 14 different subunits. Subunits NuoB, C, D, E, F, and G constitute the peripheral sector of the complex.

It is found in the cell inner membrane. The catalysed reaction is a quinone + NADH + 5 H(+)(in) = a quinol + NAD(+) + 4 H(+)(out). In terms of biological role, NDH-1 shuttles electrons from NADH, via FMN and iron-sulfur (Fe-S) centers, to quinones in the respiratory chain. The immediate electron acceptor for the enzyme in this species is believed to be ubiquinone. Couples the redox reaction to proton translocation (for every two electrons transferred, four hydrogen ions are translocated across the cytoplasmic membrane), and thus conserves the redox energy in a proton gradient. This Xylella fastidiosa (strain 9a5c) protein is NADH-quinone oxidoreductase subunit D.